Here is a 385-residue protein sequence, read N- to C-terminus: GTP cyclohydrolase-2 (385 aa).

Residues 1–189 (MYADAPSDSA…RDIADYRVHV (189 aa)) are DHBP synthase-like. The segment at 190–385 (VRTLRRVAEA…TKAERSGHMF (196 aa)) is GTP cyclohydrolase II. A GTP-binding site is contributed by 240–244 (RLHSE). C245, C256, and C258 together coordinate Zn(2+). GTP is bound by residues Q261, 283–285 (EGR), and T305. D317 functions as the Proton acceptor in the catalytic mechanism. The active-site Nucleophile is R319. Positions 340 and 345 each coordinate GTP.

This sequence in the N-terminal section; belongs to the DHBP synthase family. In the C-terminal section; belongs to the GTP cyclohydrolase II family. The cofactor is Zn(2+).

It carries out the reaction GTP + 4 H2O = 2,5-diamino-6-hydroxy-4-(5-phosphoribosylamino)-pyrimidine + formate + 2 phosphate + 3 H(+). It participates in cofactor biosynthesis; riboflavin biosynthesis; 5-amino-6-(D-ribitylamino)uracil from GTP: step 1/4. Functionally, catalyzes the conversion of GTP to 2,5-diamino-6-ribosylamino-4(3H)-pyrimidinone 5'-phosphate (DARP), formate and pyrophosphate. The chain is GTP cyclohydrolase-2 (ribA) from Azospirillum brasilense.